The primary structure comprises 60 residues: Potassium channel toxin-like Tx677 (60 aa).

Residues 1–22 (MKISALVMITLLICSMMILCQG) form the signal peptide. 3 disulfide bridges follow: Cys-30/Cys-51, Cys-36/Cys-56, and Cys-40/Cys-58.

Belongs to the short scorpion toxin superfamily. Potassium channel inhibitor family. Expressed by the venom gland.

Its subcellular location is the secreted. In terms of biological role, weakly inhibits Kv11.1/KCNH2/ERG1, Kv1.2/KCNA2 and Kv1.3/KCNA3 voltage-gated potassium channels. The chain is Potassium channel toxin-like Tx677 from Buthus israelis (Israeli scorpion).